The following is a 492-amino-acid chain: DEAD-box ATP-dependent RNA helicase RhpA (492 aa).

The short motif at 20–48 (PSFNDLGLKESVLKSVYEAGFTSPSPIQE) is the Q motif element. A Helicase ATP-binding domain is found at 51 to 220 (IPAVLQGRDV…DKILENPIKI (170 aa)). 64–71 (AQTGTGKT) contributes to the ATP binding site. A DEAD box motif is present at residues 168–171 (DESD). A Helicase C-terminal domain is found at 231–393 (DITQRFYVIN…EIPTINENQI (163 aa)). The interval 445 to 492 (AIQNPKEKTPKPSHKKTPQHERARSFKKGQHRDRHPKTNHHSKKPKRR) is disordered. The span at 469 to 492 (SFKKGQHRDRHPKTNHHSKKPKRR) shows a compositional bias: basic residues.

It belongs to the DEAD box helicase family. Homodimer. Interacts with RNase J (rnj), might be a member of a minimal RNA degradosome complex.

The protein localises to the cytoplasm. The catalysed reaction is ATP + H2O = ADP + phosphate + H(+). In terms of biological role, DEAD-box RNA helicase probably involved in RNA degradation. Unwinds dsRNA in both 5'- and 3'-directions. Background RNA-dependent ATPase activity is stimulated about 5-fold by RNaseJ (rnj). Stimulates the dsRNase activity of RNase J. The polypeptide is DEAD-box ATP-dependent RNA helicase RhpA (rhpA) (Helicobacter pylori (strain B128)).